The sequence spans 172 residues: Small ribosomal subunit protein uS13 (172 aa).

Residues 131–172 are disordered; it reads GQRTRTTGRTGVTVGVRRSKAAQAAQQQQKAQASSGGEKKQG. A compositionally biased stretch (low complexity) spans 134–163; sequence TRTTGRTGVTVGVRRSKAAQAAQQQQKAQA.

The protein belongs to the universal ribosomal protein uS13 family. As to quaternary structure, part of the 30S ribosomal subunit. Forms a loose heterodimer with protein S19. Forms two bridges to the 50S subunit in the 70S ribosome.

Its function is as follows. Located at the top of the head of the 30S subunit, it contacts several helices of the 16S rRNA. In the 70S ribosome it contacts the 23S rRNA (bridge B1a) and protein L5 of the 50S subunit (bridge B1b), connecting the 2 subunits; these bridges are implicated in subunit movement. This Sulfurisphaera tokodaii (strain DSM 16993 / JCM 10545 / NBRC 100140 / 7) (Sulfolobus tokodaii) protein is Small ribosomal subunit protein uS13.